A 213-amino-acid polypeptide reads, in one-letter code: 3-isopropylmalate dehydratase small subunit (213 aa).

It belongs to the LeuD family. LeuD type 1 subfamily. In terms of assembly, heterodimer of LeuC and LeuD.

It carries out the reaction (2R,3S)-3-isopropylmalate = (2S)-2-isopropylmalate. The protein operates within amino-acid biosynthesis; L-leucine biosynthesis; L-leucine from 3-methyl-2-oxobutanoate: step 2/4. In terms of biological role, catalyzes the isomerization between 2-isopropylmalate and 3-isopropylmalate, via the formation of 2-isopropylmaleate. This chain is 3-isopropylmalate dehydratase small subunit, found in Neisseria meningitidis serogroup C (strain 053442).